The sequence spans 153 residues: MSIEINNESAVEVDEPLIQRLATYALDTLHVHPDAELAIVMVDEGAMEQLHVQWMDEPGPTDVLSFPMDELRPGTEDRPTPAGLLGDIVVCPQVAAEQAVTAGHSTMEEILLLTAHGILHLLGFDHAEPDEEREMFGLQRDILIGFAMSERGR.

3 residues coordinate Zn(2+): His-116, His-120, and His-126.

This sequence belongs to the endoribonuclease YbeY family. Zn(2+) serves as cofactor.

The protein resides in the cytoplasm. Single strand-specific metallo-endoribonuclease involved in late-stage 70S ribosome quality control and in maturation of the 3' terminus of the 16S rRNA. The protein is Endoribonuclease YbeY of Clavibacter sepedonicus (Clavibacter michiganensis subsp. sepedonicus).